A 121-amino-acid chain; its full sequence is Small ribosomal subunit protein uS13 (121 aa).

The segment at 92 to 121 (HKAGLPVRGQKTHSNARTRKGPRLTKIKKR) is disordered. Over residues 101–121 (QKTHSNARTRKGPRLTKIKKR) the composition is skewed to basic residues.

The protein belongs to the universal ribosomal protein uS13 family. Part of the 30S ribosomal subunit. Forms a loose heterodimer with protein S19. Forms two bridges to the 50S subunit in the 70S ribosome.

In terms of biological role, located at the top of the head of the 30S subunit, it contacts several helices of the 16S rRNA. In the 70S ribosome it contacts the 23S rRNA (bridge B1a) and protein L5 of the 50S subunit (bridge B1b), connecting the 2 subunits; these bridges are implicated in subunit movement. Contacts the tRNAs in the A and P-sites. In Petrotoga mobilis (strain DSM 10674 / SJ95), this protein is Small ribosomal subunit protein uS13.